The following is a 106-amino-acid chain: ATP-dependent Clp protease adapter protein ClpS (106 aa).

Belongs to the ClpS family. Binds to the N-terminal domain of the chaperone ClpA.

Involved in the modulation of the specificity of the ClpAP-mediated ATP-dependent protein degradation. In Enterobacter sp. (strain 638), this protein is ATP-dependent Clp protease adapter protein ClpS.